We begin with the raw amino-acid sequence, 302 residues long: Ribosomal RNA small subunit methyltransferase H (302 aa).

Residues 32–34 (GGH), Asp-51, Phe-78, Asp-97, and Gln-104 contribute to the S-adenosyl-L-methionine site.

The protein belongs to the methyltransferase superfamily. RsmH family.

Its subcellular location is the cytoplasm. It carries out the reaction cytidine(1402) in 16S rRNA + S-adenosyl-L-methionine = N(4)-methylcytidine(1402) in 16S rRNA + S-adenosyl-L-homocysteine + H(+). Functionally, specifically methylates the N4 position of cytidine in position 1402 (C1402) of 16S rRNA. This chain is Ribosomal RNA small subunit methyltransferase H, found in Nitratiruptor sp. (strain SB155-2).